Consider the following 342-residue polypeptide: Heparan sulfate glucosamine 3-O-sulfotransferase 6 (342 aa).

A disordered region spans residues 1-21; that stretch reads MAGSGGLGGGAGGGQGAGAGQ. Over 1–31 the chain is Cytoplasmic; the sequence is MAGSGGLGGGAGGGQGAGAGQGAALRASRAP. The chain crosses the membrane as a helical; Signal-anchor for type II membrane protein span at residues 32 to 49; the sequence is MLLVALVLGAYCLCALPG. The Lumenal segment spans residues 50-342; that stretch reads RCPPAARAPA…QMTGQDFGWG (293 aa). The tract at residues 55 to 85 is disordered; sequence ARAPAPAPAPSEPSSSVHRPGAPGLPLASGP. Over residues 66 to 85 the composition is skewed to low complexity; it reads EPSSSVHRPGAPGLPLASGP. 3'-phosphoadenylyl sulfate is bound at residue 100–104; the sequence is KGGTR. Substrate-binding positions include 122–128 and 153–156; these read EPHFFDR and KTPS. 3'-phosphoadenylyl sulfate contacts are provided by R181 and S189. Residue 220 to 221 coordinates substrate; that stretch reads WS. N281 is a glycosylation site (N-linked (GlcNAc...) asparagine). An intrachain disulfide couples C288 to C300. 305–309 contacts 3'-phosphoadenylyl sulfate; it reads KGRPH.

The protein belongs to the sulfotransferase 1 family.

The protein localises to the golgi apparatus membrane. The enzyme catalyses alpha-D-glucosaminyl-[heparan sulfate](n) + 3'-phosphoadenylyl sulfate = 3-sulfo-alpha-D-glucosaminyl-[heparan sulfate](n) + adenosine 3',5'-bisphosphate + H(+). Its function is as follows. Sulfotransferase that utilizes 3'-phospho-5'-adenylyl sulfate (PAPS) to catalyze the transfer of a sulfo group to heparan sulfate. The substrate-specific O-sulfation generates an enzyme-modified heparan sulfate which acts as a binding receptor to Herpes Simplex Virus-1 (HSV-1) and permits its entry. Unlike 3-OST-1, does not convert non-anticoagulant heparan sulfate to anticoagulant heparan sulfate. The chain is Heparan sulfate glucosamine 3-O-sulfotransferase 6 (HS3ST6) from Homo sapiens (Human).